The primary structure comprises 258 residues: MSMATDVTNSKIQVRDLNFYYGKFHALKNISLDIAKNQVTAFIGPSGCGKSTLLRTFNKMYQLYPEQRAEGDILLDGQNILTDKQDIALLRAKVGMVFQKPTPFPMSIYDNIAFGVKLFESLSRADMDERVQWALTKAALWNETKDKLHQSGYSLSGGQQQRLCIARGIAIRPDVLLLDEPCSALDPISTGRIEELISELKSDYTVVIVTHNMQQAARCSDHTAFMYLGELIEFSDTDTLFTTPQQKQTEDYITGRYG.

Residues 12–253 enclose the ABC transporter domain; that stretch reads IQVRDLNFYY…PQQKQTEDYI (242 aa). 44 to 51 provides a ligand contact to ATP; it reads GPSGCGKS.

The protein belongs to the ABC transporter superfamily. Phosphate importer (TC 3.A.1.7) family. The complex is composed of two ATP-binding proteins (PstB), two transmembrane proteins (PstC and PstA) and a solute-binding protein (PstS).

It is found in the cell inner membrane. It catalyses the reaction phosphate(out) + ATP + H2O = ADP + 2 phosphate(in) + H(+). Its function is as follows. Part of the ABC transporter complex PstSACB involved in phosphate import. Responsible for energy coupling to the transport system. In Yersinia pestis bv. Antiqua (strain Nepal516), this protein is Phosphate import ATP-binding protein PstB 2.